The following is a 331-amino-acid chain: Tyrosine--tRNA ligase (331 aa).

Residues tyrosine 31, tyrosine 155, glutamine 159, aspartate 162, and glutamine 177 each contribute to the L-tyrosine site. The 'KMSKS' region signature appears at 218–222 (KMSKS). Lysine 221 is a binding site for ATP.

This sequence belongs to the class-I aminoacyl-tRNA synthetase family. TyrS type 4 subfamily. Homodimer.

The protein localises to the cytoplasm. The catalysed reaction is tRNA(Tyr) + L-tyrosine + ATP = L-tyrosyl-tRNA(Tyr) + AMP + diphosphate + H(+). Functionally, catalyzes the attachment of tyrosine to tRNA(Tyr) in a two-step reaction: tyrosine is first activated by ATP to form Tyr-AMP and then transferred to the acceptor end of tRNA(Tyr). This Thermoplasma volcanium (strain ATCC 51530 / DSM 4299 / JCM 9571 / NBRC 15438 / GSS1) protein is Tyrosine--tRNA ligase.